The primary structure comprises 120 residues: Large ribosomal subunit protein uL18 (120 aa).

Belongs to the universal ribosomal protein uL18 family. In terms of assembly, part of the 50S ribosomal subunit; part of the 5S rRNA/L5/L18/L25 subcomplex. Contacts the 5S and 23S rRNAs.

In terms of biological role, this is one of the proteins that bind and probably mediate the attachment of the 5S RNA into the large ribosomal subunit, where it forms part of the central protuberance. This chain is Large ribosomal subunit protein uL18, found in Trichodesmium erythraeum (strain IMS101).